The chain runs to 215 residues: Cytochrome b6 (215 aa).

The chain crosses the membrane as a helical span at residues 32-52; the sequence is IFYCLGGITLTCFLVQVATGF. Cysteine 35 is a binding site for heme c. Residues histidine 86 and histidine 100 each coordinate heme b. 3 consecutive transmembrane segments (helical) span residues 90–110, 116–136, and 186–206; these read ASMM…TGGF, LTWV…VTGY, and LHTF…FLMI. Heme b-binding residues include histidine 187 and histidine 202.

Belongs to the cytochrome b family. PetB subfamily. In terms of assembly, the 4 large subunits of the cytochrome b6-f complex are cytochrome b6, subunit IV (17 kDa polypeptide, PetD), cytochrome f and the Rieske protein, while the 4 small subunits are PetG, PetL, PetM and PetN. The complex functions as a dimer. Heme b serves as cofactor. The cofactor is heme c.

The protein resides in the plastid. Its subcellular location is the chloroplast thylakoid membrane. In terms of biological role, component of the cytochrome b6-f complex, which mediates electron transfer between photosystem II (PSII) and photosystem I (PSI), cyclic electron flow around PSI, and state transitions. The protein is Cytochrome b6 of Welwitschia mirabilis (Tree tumbo).